A 192-amino-acid chain; its full sequence is Fe/S biogenesis protein NfuA (192 aa).

Residues Cys149 and Cys152 each contribute to the [4Fe-4S] cluster site.

The protein belongs to the NfuA family. Homodimer. [4Fe-4S] cluster is required as a cofactor.

Its function is as follows. Involved in iron-sulfur cluster biogenesis. Binds a 4Fe-4S cluster, can transfer this cluster to apoproteins, and thereby intervenes in the maturation of Fe/S proteins. Could also act as a scaffold/chaperone for damaged Fe/S proteins. In Pseudoalteromonas atlantica (strain T6c / ATCC BAA-1087), this protein is Fe/S biogenesis protein NfuA.